The primary structure comprises 830 residues: Nucleolar complex-associated protein 3 (830 aa).

Disordered regions lie at residues 1-22, 67-86, 112-169, 391-436, and 802-830; these read MGKN…DVAE, KYEE…GNGE, KSKL…EETP, GKPN…KIRD, and LQSE…KKQI. 2 coiled-coil regions span residues 61–81 and 111–156; these read VMTV…LQEE and KKSK…HEKD. The span at 67-84 shows a compositional bias: basic and acidic residues; it reads KYEEERSKRKTLQEEKGN. Residues 118-129 are compositionally biased toward acidic residues; sequence AETDEAEKDVLE. The span at 130-140 shows a compositional bias: basic and acidic residues; it reads DEHVLNKSQRR. Positions 138-145 match the Nuclear localization signal 1 motif; it reads QRREKAKK. The span at 141–150 shows a compositional bias: basic residues; it reads EKAKKSKREA. Residues 159-168 are compositionally biased toward acidic residues; sequence DEILQEEEET. Residues 391-400 show a composition bias toward basic and acidic residues; the sequence is GKPNKEDEHN. A coiled-coil region spans residues 400–429; that stretch reads NKKYKKNNKRKTQEEQNQVQENERKKSKKD. The Nuclear localization signal 2 motif lies at 408 to 415; the sequence is KRKTQEEQ. The span at 420-436 shows a compositional bias: basic and acidic residues; sequence ENERKKSKKDMMSKIRD. Positions 806 to 813 match the Nuclear localization signal 3 motif; it reads EKKPLKKQ. The segment covering 817–830 has biased composition (basic residues); that stretch reads VKKKLKNPKSKKQI.

This sequence belongs to the CBF/MAK21 family. As to quaternary structure, component of nucleolar complexes. Interacts with RBL and NOC2 in both the nucleolus and nucleoplasm.

It localises to the nucleus. Its subcellular location is the nucleolus. The protein localises to the nucleoplasm. May be required for synthesis of 60S ribosomal subunits and the transport of pre-ribosomes from the nucleoplasm to the cytoplasm. Also required for initiation of DNA replication. The chain is Nucleolar complex-associated protein 3 from Arabidopsis thaliana (Mouse-ear cress).